The primary structure comprises 1506 residues: Condensin-2 complex subunit D3 (1506 aa).

The interval 154–194 (SNLTQKRKKDHSKSSKDNYRKSRKRGKPPRKEDYQVDELSR) is disordered. 3 HEAT repeats span residues 442–476 (HKFFVQEIIFDRCLDKAPTVRSKALSSFAHCLELS), 532–567 (PGERCFMTMLRKRIKDEKINVRKSALQVLMSILKHC), and 574–605 (QDLLILQDHCRDPAISVRKQALQSLTELVMAQ). Position 562 is a phosphoserine (Ser562). Residues 884-897 (SDHLPSSQGTTDAL) are compositionally biased toward polar residues. Residues 884 to 908 (SDHLPSSQGTTDALDSQPPFQPRSS) form a disordered region. Residues 968-1004 (TVMVDNYIPNISVCLKDSDPFIRKQTLVLLTNLLQEE) form an HEAT 4 repeat. Positions 1213-1270 (ALRELMNYLREVMQDYRDEINDFFAVDKQLASELEYDMKKYNEQLAQEQALTEHANAT) form a coiled coil. The disordered stretch occupies residues 1317-1353 (QDNADVPPTQSRPSAPRSNFTPTLPPISENGPLKIMS). A compositionally biased stretch (polar residues) spans 1324–1338 (PTQSRPSAPRSNFTP). Residues Ser1359, Ser1368, Ser1381, and Ser1393 each carry the phosphoserine modification. Disordered regions lie at residues 1385–1412 (LPFNVETGSPENPSSHESSLSLEKESDR) and 1473–1506 (PQSPQWNVKSPARSHGSTRSSRRSLRKAPLKTAN). The segment covering 1393-1405 (SPENPSSHESSLS) has biased composition (low complexity). Positions 1492 to 1506 (SSRRSLRKAPLKTAN) are enriched in basic residues.

Component of the condensin-2 complex, which contains the SMC2 and SMC4 heterodimer, and 3 non SMC subunits that probably regulate the complex: NCAPH2, NCAPD3 and NCAPG2.

Its subcellular location is the nucleus. Functionally, regulatory subunit of the condensin-2 complex, a complex which establishes mitotic chromosome architecture and is involved in physical rigidity of the chromatid axis. May promote the resolution of double-strand DNA catenanes (intertwines) between sister chromatids. Condensin-mediated compaction likely increases tension in catenated sister chromatids, providing directionality for type II topoisomerase-mediated strand exchanges toward chromatid decatenation. Specifically required for decatenation of centromeric ultrafine DNA bridges during anaphase. Early in neurogenesis, may play an essential role to ensure accurate mitotic chromosome condensation in neuron stem cells, ultimately affecting neuron pool and cortex size. This chain is Condensin-2 complex subunit D3 (Ncapd3), found in Mus musculus (Mouse).